We begin with the raw amino-acid sequence, 236 residues long: Movement and silencing protein TGBp1 (236 aa).

Residues 1 to 117 enclose the (+)RNA virus helicase ATP-binding domain; sequence MDSEIVERLT…EPTARAHYTC (117 aa). The (+)RNA virus helicase C-terminal domain occupies 118 to 236; sequence NRTHRLGQLT…LYTAHFAPSA (119 aa).

The protein belongs to the Tymovirales TGBp1 protein family. As to quaternary structure, homodimer and homooligomer. Interacts with capsid protein. Interacts with host AGO1; this interaction targets the host protein for degradation, thereby suppressing the antiviral RNA silencing.

Its subcellular location is the host cytoplasm. Functionally, transports viral genome to neighboring plant cells directly through plasmosdesmata, without any budding. The movement protein allows efficient cell to cell propagation, by bypassing the host cell wall barrier. Increases plasmodesma size exclusion limit. Acts as a suppressor of RNA-mediated gene silencing, also known as post-transcriptional gene silencing (PTGS), a mechanism of plant viral defense that limits the accumulation of viral RNAs. The sequence is that of Movement and silencing protein TGBp1 from Setaria italica (Foxtail millet).